Reading from the N-terminus, the 400-residue chain is Nicotinate phosphoribosyltransferase (400 aa).

At histidine 220 the chain carries Phosphohistidine; by autocatalysis.

The protein belongs to the NAPRTase family. Post-translationally, transiently phosphorylated on a His residue during the reaction cycle. Phosphorylation strongly increases the affinity for substrates and increases the rate of nicotinate D-ribonucleotide production. Dephosphorylation regenerates the low-affinity form of the enzyme, leading to product release.

The catalysed reaction is nicotinate + 5-phospho-alpha-D-ribose 1-diphosphate + ATP + H2O = nicotinate beta-D-ribonucleotide + ADP + phosphate + diphosphate. It participates in cofactor biosynthesis; NAD(+) biosynthesis; nicotinate D-ribonucleotide from nicotinate: step 1/1. In terms of biological role, catalyzes the synthesis of beta-nicotinate D-ribonucleotide from nicotinate and 5-phospho-D-ribose 1-phosphate at the expense of ATP. In Shigella sonnei (strain Ss046), this protein is Nicotinate phosphoribosyltransferase.